Reading from the N-terminus, the 174-residue chain is Regenerating islet-derived protein 3-alpha (174 aa).

The signal sequence occupies residues 1–25 (MLPRLSFNNVSWTLLYYLFIFQVRG). Positions 26–36 (EDSQKAVPSTR) are excised as a propeptide. Disulfide bonds link cysteine 39–cysteine 50, cysteine 67–cysteine 170, and cysteine 145–cysteine 162. One can recognise a C-type lectin domain in the interval 46–171 (YRSYCYTLVT…CDVELPFVCK (126 aa)). The tract at residues 102–117 (WIWLHDPTMGQQPNGG) is sufficient to activate EXTL3. Zn(2+)-binding residues include histidine 106 and glutamate 120.

In terms of assembly, forms a hexameric membrane-permeabilizing oligomeric pore on membrane phospholipids. The hexamer is formed by three dimers related by helical symmetry. Forms filaments, filamentation traps pore complexes and limits damage to host cells. Interacts with EXTL3. Proteolytic processing by trypsin removes an inhibitory N-terminal propeptide and is essential for peptidoglycan binding and antibacterial activity. Low expression found in healthy pancreas.

Its subcellular location is the secreted. Bactericidal C-type lectin. The lack of the EPN motif may explain its inability to bind peptidoglycan. In terms of biological role, acts as a hormone in response to different stimuli like anti-inflammatory signals, such as IL17A, or gut microbiome. Secreted by different cell types to activate its receptor EXTL3 and induce cell specific signaling pathways. Induced by IL17A in keratinocytes, regulates keratinocyte proliferation and differentiation after skin injury via activation of EXTL3-PI3K-AKT signaling pathway. In parallel, inhibits skin inflammation through the inhibition of inflammatory cytokines such as IL6 and TNF. In pancreas, is able to permealize beta-cells membrane and stimulate their proliferation. The polypeptide is Regenerating islet-derived protein 3-alpha (Reg3a) (Rattus norvegicus (Rat)).